The sequence spans 315 residues: Tryptophan prenyltransferase ComQ (315 aa).

Residues Asp95 and Asp99 each coordinate Mg(2+).

This sequence belongs to the FPP/GGPP synthase family. It depends on Mg(2+) as a cofactor.

It localises to the cell membrane. It catalyses the reaction L-tryptophyl-[protein] + (2E,6E)-farnesyl diphosphate = (2S,3R)-3-farnesyl-2,3-dihydro-2,N(alpha)-cyclo-L-tryptophyl-[protein] + diphosphate. Part of a major quorum-sensing system that regulates the development of genetic competence. Involved in the maturation of the competence pheromone ComX. Acts by catalyzing the transfer of a farnesyl group on the ComX pheromone. In vitro, can also catalyze the farnesylation of single tryptophan and tryptophan derivatives. The chain is Tryptophan prenyltransferase ComQ from Bacillus subtilis subsp. natto (strain BEST195).